The sequence spans 315 residues: Putative methyltransferase NSUN5C (315 aa).

Residues 50–56, D74, R79, and D121 contribute to the S-adenosyl-L-methionine site; that span reads VPPQAIK. Catalysis depends on C175, which acts as the Nucleophile. Residues 245 to 269 form a disordered region; it reads TSASQAKASAPERTPSPAPKRKKRA.

Belongs to the class I-like SAM-binding methyltransferase superfamily. RsmB/NOP family. Ubiquitous.

Its function is as follows. May have S-adenosyl-L-methionine-dependent methyl-transferase activity. The polypeptide is Putative methyltransferase NSUN5C (NSUN5P2) (Homo sapiens (Human)).